Here is a 639-residue protein sequence, read N- to C-terminus: 1-deoxy-D-xylulose-5-phosphate synthase (639 aa).

Residues histidine 79 and 120 to 122 (GHS) contribute to the thiamine diphosphate site. Mg(2+) is bound at residue aspartate 151. Thiamine diphosphate contacts are provided by residues 152–153 (GS), asparagine 180, tyrosine 289, and glutamate 371. A Mg(2+)-binding site is contributed by asparagine 180.

The protein belongs to the transketolase family. DXPS subfamily. As to quaternary structure, homodimer. The cofactor is Mg(2+). Thiamine diphosphate is required as a cofactor.

The enzyme catalyses D-glyceraldehyde 3-phosphate + pyruvate + H(+) = 1-deoxy-D-xylulose 5-phosphate + CO2. The protein operates within metabolic intermediate biosynthesis; 1-deoxy-D-xylulose 5-phosphate biosynthesis; 1-deoxy-D-xylulose 5-phosphate from D-glyceraldehyde 3-phosphate and pyruvate: step 1/1. Functionally, catalyzes the acyloin condensation reaction between C atoms 2 and 3 of pyruvate and glyceraldehyde 3-phosphate to yield 1-deoxy-D-xylulose-5-phosphate (DXP). This Agrobacterium fabrum (strain C58 / ATCC 33970) (Agrobacterium tumefaciens (strain C58)) protein is 1-deoxy-D-xylulose-5-phosphate synthase.